We begin with the raw amino-acid sequence, 73 residues long: uncharacterized protein (73 aa).

This is an uncharacterized protein from Vertebrata (FPV).